The primary structure comprises 305 residues: MPTAIFLMGPTASGKTDLAIELCQALPCDIISVDSALIYRGMDIGTAKPSAAELALAPHRLIDILDPAVSYSAADFCKDALREMKEIAERGRIPLLVGGTMLYFKALLEGLSPLPSADPVIRAGIEEEAARLGWQALHDELVRIDPVAGARIHPNDPQRLSRALEVYRISGKTLTELTQVQGEGLPYRVLQFAIAPSDRAVLHQRIELRFDKMLQGGFEQEVRALYQRGDLTPDLPSIRCVGYRQMWDYLAGEVEYDEMRYRGIVATRQLAKRQMTWLRGWSDVTWLESGESGNLARVVARAGVA.

Residue 9–16 (GPTASGKT) participates in ATP binding. A substrate-binding site is contributed by 11–16 (TASGKT). 3 interaction with substrate tRNA regions span residues 34-37 (DSAL), 158-162 (QRLSR), and 239-244 (RCVGYR).

Belongs to the IPP transferase family. Monomer. The cofactor is Mg(2+).

It catalyses the reaction adenosine(37) in tRNA + dimethylallyl diphosphate = N(6)-dimethylallyladenosine(37) in tRNA + diphosphate. Functionally, catalyzes the transfer of a dimethylallyl group onto the adenine at position 37 in tRNAs that read codons beginning with uridine, leading to the formation of N6-(dimethylallyl)adenosine (i(6)A). This chain is tRNA dimethylallyltransferase, found in Aeromonas hydrophila subsp. hydrophila (strain ATCC 7966 / DSM 30187 / BCRC 13018 / CCUG 14551 / JCM 1027 / KCTC 2358 / NCIMB 9240 / NCTC 8049).